A 218-amino-acid polypeptide reads, in one-letter code: Glycerol-3-phosphate acyltransferase (218 aa).

The next 6 helical transmembrane spans lie at 3–23, 53–73, 82–102, 112–132, 142–162, and 166–186; these read FAIFAFLSFISGSIPFGYWIA, GFPVLVLDVAKGIFPVYLSGI, FQLACGVLAVLGHMFSPFLGF, LGVFLVLTPIACFGAIFVFLV, IGSIFASLTLPLVYAFSSILL, and EVSYWILGTMVFISIGIILTH.

This sequence belongs to the PlsY family. In terms of assembly, probably interacts with PlsX.

The protein resides in the cell inner membrane. The catalysed reaction is an acyl phosphate + sn-glycerol 3-phosphate = a 1-acyl-sn-glycero-3-phosphate + phosphate. It functions in the pathway lipid metabolism; phospholipid metabolism. Its function is as follows. Catalyzes the transfer of an acyl group from acyl-phosphate (acyl-PO(4)) to glycerol-3-phosphate (G3P) to form lysophosphatidic acid (LPA). This enzyme utilizes acyl-phosphate as fatty acyl donor, but not acyl-CoA or acyl-ACP. The protein is Glycerol-3-phosphate acyltransferase of Leptospira borgpetersenii serovar Hardjo-bovis (strain JB197).